Here is a 222-residue protein sequence, read N- to C-terminus: CASP-like protein 1E1 (222 aa).

The Cytoplasmic segment spans residues 1–59 (MEASRVKPGFNGVGMAAGSVNGSSRRPGPGLGYGYGYYMGSGAAAGGSGRAAQAPVDGC). A helical membrane pass occupies residues 60–80 (SVALRVFVVASTLVSAVVMGV). Residues 81-110 (DRQTRTIQITITDALPPLEVPLTANWSYSS) are Extracellular-facing. Asn105 is a glycosylation site (N-linked (GlcNAc...) asparagine). A helical transmembrane segment spans residues 111-131 (AFVYFVVANAMVCLFSAAALA). The Cytoplasmic portion of the chain corresponds to 132 to 146 (ACRSRAAMVPVMVGD). A helical membrane pass occupies residues 147–167 (LLALALLYSAVGAAAEFGILG). Topologically, residues 168-189 (ERGNSHVRWAKVCNVYGRFCDR) are extracellular. The chain crosses the membrane as a helical span at residues 190–210 (AMAAVIVSLIGAFANLVLLML). Residues 211 to 222 (NILTIHKSSSYY) are Cytoplasmic-facing.

This sequence belongs to the Casparian strip membrane proteins (CASP) family. Homodimer and heterodimers.

The protein localises to the cell membrane. This chain is CASP-like protein 1E1, found in Sorghum bicolor (Sorghum).